The following is a 412-amino-acid chain: Alpha-1-antiproteinase (412 aa).

An N-terminal signal peptide occupies residues 1-24 (MPSSISWGLLLLAGLCCLAPGSLA). Position 33 is a phosphoserine (serine 33). N-linked (GlcNAc...) asparagine glycosylation is found at asparagine 65, asparagine 102, asparagine 165, and asparagine 266. Positions 368 to 387 (GVTVLEAIPMSLPPDVRFDR) are RCL. Serine 378 is modified (phosphoserine).

Belongs to the serpin family. As to quaternary structure, interacts with CELA2A. Interacts with ERGIC3 and LMAN1/ERGIC53. Interacts with PRSS1/Trypsin. Plasma.

The protein resides in the secreted. Inhibitor of serine proteases. This chain is Alpha-1-antiproteinase, found in Callosciurus caniceps (Gray-bellied squirrel).